The following is an 868-amino-acid chain: MQHMTTAQIRQQFLDFFASKQHQVVPSSSLIPGNDATLLFNNAGMVQFKDVFLGAESRPYTRATSSQRCVRAGGKHNDLENVGYTARHHTFFEMLGNFSFGDYFKQDAIKFAWQFLTEEVKLPKEKLLVTIYHDDEEAFNYWSNDIGLPADRIIRIATADNFWSMGDTGPCGPCSEIFYDHGEHIWGGPPGSPEEDGDRFIEIWNLVFMQYNRQNDGTMLPLPKQSVDTGMGLERIAAILQGVHSNYEIDLFKGLIAAAASVTNAQDMDDKSLRVVADHIRSCAFLISDGVMPSNEGRGYVLRRIIRRAVRHGNKLGAQGAFFYKLVAALIEQMGQAYPELAKQQEIIEKVLRIEEEQFGKTLERGLAILEESLSDLKGDVIPGDLVFKLYDTYGFPADLTADVARERQMTIDNKGFEECMAVQRKTAQQAGKFGADYNDQLKSDKQTTYKGYTTTSHSATVVEVFAGSESVSLLEDGQKGIVILDRTPFYAESGGQVGDTGVISVAGGEFTVTNTTKLGNAFAHHGIVQGRIGLNDKVEATIDDARRERIKKNHTATHILHETLRQLLGEHVGQKGSLVQAERLRFDFSHFEAVTKEELREIERVVNDEIRCNFALSTELMAIDDAKAKGAMALFGEKYDDEVRVVTIGDYSIELCGGTHVERAGDIGLFKIVSESGIAAGVRRIEAVTGADAIAYVSEQEQKLNDVAAVVKADSASVLEKVTALLDKSKQLEKQIAQLNDKLASAAGASLLDSVVEINGIKLLIANVKGTESKALRGMVDDLKNKIGSGVIALGVASDDKVSLIAGVTKDLTGRVKAGELVNHMASQVGGKGGGRPDMAQAGGSEPENLTAALDSVTAWFTEKTQA.

Positions 555, 559, 657, and 661 each coordinate Zn(2+). Residues 828-847 are disordered; the sequence is SQVGGKGGGRPDMAQAGGSE.

The protein belongs to the class-II aminoacyl-tRNA synthetase family. It depends on Zn(2+) as a cofactor.

Its subcellular location is the cytoplasm. The catalysed reaction is tRNA(Ala) + L-alanine + ATP = L-alanyl-tRNA(Ala) + AMP + diphosphate. Functionally, catalyzes the attachment of alanine to tRNA(Ala) in a two-step reaction: alanine is first activated by ATP to form Ala-AMP and then transferred to the acceptor end of tRNA(Ala). Also edits incorrectly charged Ser-tRNA(Ala) and Gly-tRNA(Ala) via its editing domain. The protein is Alanine--tRNA ligase of Pseudoalteromonas translucida (strain TAC 125).